The primary structure comprises 157 residues: Probable succinate transporter subunit YjjB (157 aa).

Helical transmembrane passes span I6–M26, V51–G71, V87–I107, and F129–W149.

Belongs to the ThrE exporter (TC 2.A.79) family. In terms of assembly, the transporter is composed of YjjB and YjjP.

The protein resides in the cell inner membrane. Involved in succinate export with YjjP. Both proteins are required for export. In Proteus mirabilis (strain HI4320), this protein is Probable succinate transporter subunit YjjB.